A 598-amino-acid polypeptide reads, in one-letter code: Transcription factor COE3 (598 aa).

Residues 1–23 (MFGIQENIPRGGTTMKEEPLGGG) are disordered. An interaction with DNA region spans residues 63–66 (RKSN). Residues 151 to 170 (CRVLLTHEIMCSRCCDKKSC) form a C5-type zinc finger. Interaction with DNA regions lie at residues 197-204 (NCLKNAGN) and 236-239 (NNSK). The 84-residue stretch at 264-347 (PCIKAISPSE…KGAPGRFVYT (84 aa)) folds into the IPT/TIG domain. Positions 452-483 (TSQANDQVGYSRNTSSVSPRGYVPSSTPQQSN) are disordered.

The protein belongs to the COE family. As to quaternary structure, forms either a homodimer or a heterodimer with a related family member.

Its subcellular location is the nucleus. Its function is as follows. Acts as a transcriptional activator. The sequence is that of Transcription factor COE3 (coe3) from Xenopus laevis (African clawed frog).